A 211-amino-acid polypeptide reads, in one-letter code: Protein-L-isoaspartate O-methyltransferase (211 aa).

Serine 62 is an active-site residue.

The protein belongs to the methyltransferase superfamily. L-isoaspartyl/D-aspartyl protein methyltransferase family.

It localises to the cytoplasm. It catalyses the reaction [protein]-L-isoaspartate + S-adenosyl-L-methionine = [protein]-L-isoaspartate alpha-methyl ester + S-adenosyl-L-homocysteine. Its function is as follows. Catalyzes the methyl esterification of L-isoaspartyl residues in peptides and proteins that result from spontaneous decomposition of normal L-aspartyl and L-asparaginyl residues. It plays a role in the repair and/or degradation of damaged proteins. In Shewanella baltica (strain OS195), this protein is Protein-L-isoaspartate O-methyltransferase.